The sequence spans 298 residues: Ketohexokinase (298 aa).

The beta-D-fructose site is built by Asp-15, Gly-41, Asn-42, and Asn-45. Residues Arg-108, 226 to 229 (AEEG), and 255 to 258 (GAGD) each bind ATP. Asp-258 provides a ligand contact to beta-D-fructose.

It belongs to the carbohydrate kinase PfkB family. As to quaternary structure, homodimer.

The catalysed reaction is beta-D-fructose + ATP = beta-D-fructose 1-phosphate + ADP + H(+). It functions in the pathway carbohydrate metabolism; fructose metabolism. Its activity is regulated as follows. Requires potassium. Inhibition by ADP. Functionally, catalyzes the phosphorylation of the ketose sugar fructose to fructose-1-phosphate. This is Ketohexokinase from Mus musculus (Mouse).